Here is a 273-residue protein sequence, read N- to C-terminus: WIMGHMVNANYQIDEFVNLGANSIETDVSFDSSANPEYTYHGVPCDCRRWCKKWEYFNNFLKALRKATTPGDSKYHEKLVLVVFDLKTGSLYDNQAYDAGKKLAKNLLQHYWNNGNNGGRAYIVLSIPNLAHYKLITGFKETLKTEGHPELMEKVGYDFSGNDDIGDVANAYKKAGVTGHVWQSDGITNCLLRGLDRVRKAVANRDSSNGYINKVYYWTVDKRQSTRDALDAGVDGIMTNYPDVIADVLNESAYKAKFRIASYDDNPWETFKN.

The active site involves His-5. Residues Glu-25 and Asp-27 each coordinate Mg(2+). Residue His-41 is the Nucleophile of the active site. Cystine bridges form between Cys-45/Cys-51 and Cys-47/Cys-190. Asp-85 contributes to the Mg(2+) binding site. An N-linked (GlcNAc...) asparagine glycan is attached at Asn-250.

Belongs to the arthropod phospholipase D family. Class II subfamily. Mg(2+) is required as a cofactor. Expressed by the venom gland.

The protein resides in the secreted. The catalysed reaction is an N-(acyl)-sphingosylphosphocholine = an N-(acyl)-sphingosyl-1,3-cyclic phosphate + choline. It catalyses the reaction an N-(acyl)-sphingosylphosphoethanolamine = an N-(acyl)-sphingosyl-1,3-cyclic phosphate + ethanolamine. It carries out the reaction a 1-acyl-sn-glycero-3-phosphocholine = a 1-acyl-sn-glycero-2,3-cyclic phosphate + choline. The enzyme catalyses a 1-acyl-sn-glycero-3-phosphoethanolamine = a 1-acyl-sn-glycero-2,3-cyclic phosphate + ethanolamine. Dermonecrotic toxins cleave the phosphodiester linkage between the phosphate and headgroup of certain phospholipids (sphingolipid and lysolipid substrates), forming an alcohol (often choline) and a cyclic phosphate. This toxin acts on sphingomyelin (SM). It may also act on ceramide phosphoethanolamine (CPE), lysophosphatidylcholine (LPC) and lysophosphatidylethanolamine (LPE), but not on lysophosphatidylserine (LPS), and lysophosphatidylglycerol (LPG). It acts by transphosphatidylation, releasing exclusively cyclic phosphate products as second products. Induces dermonecrosis, hemolysis, increased vascular permeability, edema, inflammatory response, and platelet aggregation. The polypeptide is Dermonecrotic toxin LapSicTox-alphaIB2 (Loxosceles apachea (Apache recluse spider)).